A 320-amino-acid chain; its full sequence is GMP reductase (320 aa).

Catalysis depends on Cys-174, which acts as the Thioimidate intermediate. NADP(+) is bound at residue 203–226; that stretch reads IIADGGLRVHGDIAKSIRMGASFC.

Belongs to the IMPDH/GMPR family. GuaC type 2 subfamily.

The catalysed reaction is IMP + NH4(+) + NADP(+) = GMP + NADPH + 2 H(+). Functionally, catalyzes the irreversible NADPH-dependent deamination of GMP to IMP. It functions in the conversion of nucleobase, nucleoside and nucleotide derivatives of G to A nucleotides, and in maintaining the intracellular balance of A and G nucleotides. This chain is GMP reductase, found in Mycoplasma mycoides subsp. mycoides SC (strain CCUG 32753 / NCTC 10114 / PG1).